The chain runs to 406 residues: Imidazolonepropionase (406 aa).

Positions 65 and 67 each coordinate Fe(3+). Zn(2+) contacts are provided by His-65 and His-67. Arg-74, Tyr-137, and His-170 together coordinate 4-imidazolone-5-propanoate. An N-formimidoyl-L-glutamate-binding site is contributed by Tyr-137. His-235 lines the Fe(3+) pocket. A Zn(2+)-binding site is contributed by His-235. 4-imidazolone-5-propanoate is bound at residue Gln-238. Asp-310 provides a ligand contact to Fe(3+). A Zn(2+)-binding site is contributed by Asp-310. The N-formimidoyl-L-glutamate site is built by Asn-312 and Gly-314. Position 315 (Thr-315) interacts with 4-imidazolone-5-propanoate.

This sequence belongs to the metallo-dependent hydrolases superfamily. HutI family. Zn(2+) serves as cofactor. Requires Fe(3+) as cofactor.

It localises to the cytoplasm. It catalyses the reaction 4-imidazolone-5-propanoate + H2O = N-formimidoyl-L-glutamate. It participates in amino-acid degradation; L-histidine degradation into L-glutamate; N-formimidoyl-L-glutamate from L-histidine: step 3/3. Catalyzes the hydrolytic cleavage of the carbon-nitrogen bond in imidazolone-5-propanoate to yield N-formimidoyl-L-glutamate. It is the third step in the universal histidine degradation pathway. The polypeptide is Imidazolonepropionase (Vibrio vulnificus (strain YJ016)).